The sequence spans 145 residues: Immunoglobulin iota chain (145 aa).

The signal sequence occupies residues 1-19 (MSWAPVLLMLFVYCTGCGP). Residues 20–41 (QPVLHQPPAMSSALGTTIRLTC) form a framework-1 region. Residues 20–132 (QPVLHQPPAM…EKEEREREWE (113 aa)) form the Ig-like V-type domain. Residues Cys-41 and Cys-115 are joined by a disulfide bond. The segment at 42 to 56 (TLRNDHDIGVYSVYW) is complementarity-determining-1. The segment at 57–70 (YQQRPGHPPRFLLR) is framework-2. The complementarity-determining-2 stretch occupies residues 71-81 (YFSQSDKSQGP). The tract at residues 82–115 (QVPPRFSGSKDVARNRGYLSISELQPEDEAMYYC) is framework-3. The segment covering 121 to 130 (SSEKEERERE) has biased composition (basic and acidic residues). The segment at 121-145 (SSEKEEREREWEEEMEPTAARTRVP) is disordered.

It belongs to the immunoglobulin superfamily. Interacts with IGLL1. Interacts with SYNV1/HRD1 (via N-terminus); this interaction leads to increased VPREB1 ubiquitination and degradation in pre-B cells, possibly through a lysosomal, not proteasomal, pathway. As to expression, only expressed by pre-B-cells.

The protein localises to the endoplasmic reticulum. Its function is as follows. Associates with the Ig-mu chain to form a molecular complex that is expressed on the surface of pre-B-cells. This complex presumably regulates Ig gene rearrangements in the early steps of B-cell differentiation. This Homo sapiens (Human) protein is Immunoglobulin iota chain (VPREB1).